We begin with the raw amino-acid sequence, 791 residues long: Sphingomyelin phosphodiesterase 4 (791 aa).

Residues 755-775 form a helical membrane-spanning segment; the sequence is LFALLSFGLFSSTGLILIISF.

It depends on Mg(2+) as a cofactor.

Its subcellular location is the endoplasmic reticulum membrane. The protein localises to the golgi apparatus membrane. The protein resides in the nucleus envelope. It is found in the cell membrane. It localises to the sarcolemma. It catalyses the reaction a sphingomyelin + H2O = phosphocholine + an N-acylsphing-4-enine + H(+). Catalyzes the hydrolysis of membrane sphingomyelin to form phosphorylcholine and ceramide. It has a relevant role in the homeostasis of membrane sphingolipids, thereby influencing membrane integrity, and endoplasmic reticulum organization and function. May sensitize cells to DNA damage-induced apoptosis. This chain is Sphingomyelin phosphodiesterase 4 (smpd4), found in Danio rerio (Zebrafish).